We begin with the raw amino-acid sequence, 60 residues long: Large ribosomal subunit protein bL32 (60 aa).

The segment covering 1–16 (MAVPKRKTTPSKRGMR) has biased composition (basic residues). Positions 1–34 (MAVPKRKTTPSKRGMRRAHDALSSPVYIEDKDSG) are disordered.

It belongs to the bacterial ribosomal protein bL32 family.

The chain is Large ribosomal subunit protein bL32 from Maricaulis maris (strain MCS10) (Caulobacter maris).